A 91-amino-acid chain; its full sequence is Large ribosomal subunit protein eL34 (91 aa).

The segment at 48–71 (RGRPVEMRKLPKTKKRPERPYPHL) is disordered.

This sequence belongs to the eukaryotic ribosomal protein eL34 family.

The chain is Large ribosomal subunit protein eL34 (rpl34e) from Pyrococcus abyssi (strain GE5 / Orsay).